Here is a 203-residue protein sequence, read N- to C-terminus: Formate hydrogenlyase subunit 2 (203 aa).

4Fe-4S ferredoxin-type domains follow at residues 2 to 32 (NRFVIADSTLCIGCHTCEAACSETHRQHGLQ), 42 to 72 (NEKESAPQLCHHCEDAPCAVVCPVNAITRVD), 73 to 102 (GAVQLNESLCVSCKLCGIACPFGAIEFSGS), and 137 to 169 (RAIAVKCDLCSFDEQGPACVRMCPTKALHLVDN). Residues C12, C15, C18, C22, C51, C54, C59, C63, C82, C85, C88, C92, C143, C146, C155, and C159 each contribute to the [4Fe-4S] cluster site.

FHL comprises of a formate dehydrogenase, unidentified electron carriers and a hydrogenase (isoenzyme 3). In this non-energy conserving pathway, molecular hydrogen and carbodioxide are released from formate. The cofactor is [4Fe-4S] cluster.

Probable electron transfer protein for hydrogenase 3. The protein is Formate hydrogenlyase subunit 2 (hycB) of Escherichia coli (strain K12).